The primary structure comprises 231 residues: MVEINDIIKLYTVHPNLDLIDKNFAEDCEFEAFNIPSFKVKGIEAIHEIFKAIGFYAKDIKISKYNYTHSSHCIVLNTQQEITFNILPFVKFNYRMIINIHKNKENKITKFEEITDLESVIQNIPLANYGYFNIIKPALGYLMVKAGSYNRGFQNNGPNKIQATMERLSDNFVEKKEVNYSEPLIKLSKNFNGVTHQDKIDNMDEELFNSKKIDIKDGSNNAWKKPLNLHQ.

The chain is SrfA-induced gene F protein (sigF) from Dictyostelium discoideum (Social amoeba).